The sequence spans 847 residues: Alanine--tRNA ligase (847 aa).

4 residues coordinate Zn(2+): His554, His558, Cys656, and His660.

It belongs to the class-II aminoacyl-tRNA synthetase family. The cofactor is Zn(2+).

It is found in the cytoplasm. The enzyme catalyses tRNA(Ala) + L-alanine + ATP = L-alanyl-tRNA(Ala) + AMP + diphosphate. Functionally, catalyzes the attachment of alanine to tRNA(Ala) in a two-step reaction: alanine is first activated by ATP to form Ala-AMP and then transferred to the acceptor end of tRNA(Ala). Also edits incorrectly charged Ser-tRNA(Ala) and Gly-tRNA(Ala) via its editing domain. In Helicobacter pylori (strain HPAG1), this protein is Alanine--tRNA ligase.